Consider the following 95-residue polypeptide: Aspartyl/glutamyl-tRNA(Asn/Gln) amidotransferase subunit C (95 aa).

It belongs to the GatC family. As to quaternary structure, heterotrimer of A, B and C subunits.

The catalysed reaction is L-glutamyl-tRNA(Gln) + L-glutamine + ATP + H2O = L-glutaminyl-tRNA(Gln) + L-glutamate + ADP + phosphate + H(+). The enzyme catalyses L-aspartyl-tRNA(Asn) + L-glutamine + ATP + H2O = L-asparaginyl-tRNA(Asn) + L-glutamate + ADP + phosphate + 2 H(+). In terms of biological role, allows the formation of correctly charged Asn-tRNA(Asn) or Gln-tRNA(Gln) through the transamidation of misacylated Asp-tRNA(Asn) or Glu-tRNA(Gln) in organisms which lack either or both of asparaginyl-tRNA or glutaminyl-tRNA synthetases. The reaction takes place in the presence of glutamine and ATP through an activated phospho-Asp-tRNA(Asn) or phospho-Glu-tRNA(Gln). This chain is Aspartyl/glutamyl-tRNA(Asn/Gln) amidotransferase subunit C, found in Chlorobium luteolum (strain DSM 273 / BCRC 81028 / 2530) (Pelodictyon luteolum).